Consider the following 95-residue polypeptide: Probable FAD-linked sulfhydryl oxidase OPG072 (95 aa).

The Intravirion segment spans residues 1 to 8 (MNPKHWGR). In terms of domain architecture, ERV/ALR sulfhydryl oxidase spans 1–95 (MNPKHWGRAV…AIDVSKVKPL (95 aa)). The chain crosses the membrane as a helical span at residues 9-25 (AVWTIIFIVLSQAGLDG). The Virion surface segment spans residues 26-95 (NIEACKRKLY…AIDVSKVKPL (70 aa)). Cysteines 43 and 46 form a disulfide.

It belongs to the orthopoxvirus OPG072 family. In terms of assembly, interacts with OPG128; this interaction involves formation of a transient disulfide-bonded intermediate, allowing disulfide bond transfer. FAD serves as cofactor.

Its subcellular location is the virion membrane. The protein resides in the host cytoplasm. The catalysed reaction is 2 R'C(R)SH + O2 = R'C(R)S-S(R)CR' + H2O2. In terms of biological role, FAD-dependent sulfhydryl oxidase that catalyzes disulfide bond formation. The complete pathway for formation of disulfide bonds in intracellular virion membrane proteins sequentially involves thiol-disulfide transfer between OPG072, OPG128 and OPG088. This chain is Probable FAD-linked sulfhydryl oxidase OPG072 (OPG072), found in Monkeypox virus.